A 651-amino-acid polypeptide reads, in one-letter code: MEFKGYIKEKFPYPKVREPQKRMMLKIYECIKNKRNLIVEAPTGVGKTLGYLIPALYFAERRKRVLILTETIDQQVRIYEDLSSLRHNLKVAFLMGKSNFICKSKGGKANRLYCQLNKKCLYRPNKRPICYCGTKKQPVNLGDKVIYYCPYCTCEYQKAKIESILADIVVMNNSMFYYAKEDIEAKRDIDIIICDEAHKLESSIRNTSTIIINPELPINRLKYMAIHYAPNILKKRLDIGDENFWEIIEKYLTSRGINIDICKETIIFDGENLSSWKYKTELAVLGAILDAYYQINNIKNKILRFNENEEIDREELRFEIDNKALIAIELDFIHKKKLSDLYLLEFIENIKNLRYINENYVVYRSGNSLLCEPVFVSSHLKELYGNAVVIHCSATIGNLKMHALKTGLDKAEFLILESPFPKNRKKIIALKDGVDMKYERKDREKANKNLLKILEAINGNSLVLFKSFEDLDSFYKYLKREITKTNIKNKNIHVYEQGMDGKEAKELKERFEKIGGILLATGRFAEGVDIPGEALVGVVIDSLPFPVPTPLILREQKILEERFKIRGVRDAHWRAFLMTSFDRMARTLVQMIGRLIRTENDYGVVVIQDKRFADWVGRVMREKGYLKDNYEVMSLDMAIKYIPKFMSQFKN.

In terms of domain architecture, Helicase ATP-binding spans 6-255 (YIKEKFPYPK…EIIEKYLTSR (250 aa)). 41 to 48 (APTGVGKT) is a binding site for ATP. 3 residues coordinate [4Fe-4S] cluster: C102, C149, and C154. The DEAH box signature appears at 195–198 (DEAH). The Helicase C-terminal domain occupies 449-638 (NLLKILEAIN…NYEVMSLDMA (190 aa)).

It belongs to the helicase family. DinG subfamily. The cofactor is [4Fe-4S] cluster.

It catalyses the reaction Couples ATP hydrolysis with the unwinding of duplex DNA at the replication fork by translocating in the 5'-3' direction. This creates two antiparallel DNA single strands (ssDNA). The leading ssDNA polymer is the template for DNA polymerase III holoenzyme which synthesizes a continuous strand.. The catalysed reaction is ATP + H2O = ADP + phosphate + H(+). Its function is as follows. Might be a 5'-3' DNA helicase. This chain is Probable ATP-dependent helicase MJ0942, found in Methanocaldococcus jannaschii (strain ATCC 43067 / DSM 2661 / JAL-1 / JCM 10045 / NBRC 100440) (Methanococcus jannaschii).